The sequence spans 528 residues: Butyrophilin subfamily 2 member A2 (528 aa).

The signal sequence occupies residues 1–29 (MESAAALHFSRPASLLLLLLLSLCALVSA). At 30–249 (QVTVVGPTDP…SFMPSVSPCA (220 aa)) the chain is on the extracellular side. The Ig-like V-type domain occupies 31 to 142 (VTVVGPTDPI…SYDEAILHLI (112 aa)). Asn47, Asn115, and Asn121 each carry an N-linked (GlcNAc...) asparagine glycan. Cys52 and Cys126 are oxidised to a cystine. The 83-residue stretch at 150-232 (PLIEMRGHED…NNTLLSQKKE (83 aa)) folds into the Ig-like C2-type domain. Residues 250-270 (VALPIVVVILMILFAVCMYWI) traverse the membrane as a helical segment. The stretch at 270-320 (INKLQKEKKILSGEKEFERETREIAVKELEKERVQKEEELQVKEKLQEELR) forms a coiled coil. The Cytoplasmic segment spans residues 271-528 (NKLQKEKKIL…LHRVGTHQSL (258 aa)). Residues 311 to 507 (VKEKLQEELR…IFICPALTGA (197 aa)) form the B30.2/SPRY domain.

The protein belongs to the immunoglobulin superfamily. BTN/MOG family. N-glycosylated.

It is found in the membrane. Functionally, inhibits the proliferation of CD4 and CD8 T-cells activated by anti-CD3 antibodies, T-cell metabolism and IL2 and IFNG secretion. The sequence is that of Butyrophilin subfamily 2 member A2 (BTN2A2) from Pongo abelii (Sumatran orangutan).